Consider the following 95-residue polypeptide: FXYD domain-containing ion transport regulator 6 (95 aa).

An N-terminal signal peptide occupies residues 1–18 (MELVLVFLCSLLAPTVLA). At 19–35 (SAAEKEKEMDPFHYDYQ) the chain is on the extracellular side. Residues 36-58 (TLRIGGLVFAVVLFSVGILLILS) form a helical membrane-spanning segment. Over 59-95 (RRCKCSFNQKPRAPGDEEAQVENLITANATEPQKAEN) the chain is Cytoplasmic.

This sequence belongs to the FXYD family. In terms of assembly, regulatory subunit of the sodium/potassium-transporting ATPase which is composed of a catalytic alpha subunit, a non-catalytic beta subunit and an additional regulatory subunit. The regulatory subunit, a member of the FXYD protein family, modulates the enzymatic activity in a tissue- and isoform-specific way by changing affinities of the Na+/K+-ATPase toward Na(+), K(+) or ATP.

It localises to the cell membrane. Functionally, associates with and regulates the activity of the sodium/potassium-transporting ATPase (NKA) which catalyzes the hydrolysis of ATP coupled with the exchange of Na(+) and K(+) ions across the plasma membrane. Reduces the apparent affinity for intracellular Na(+) with no change in the apparent affinity for extracellular K(+). In addition to modulating NKA kinetics, may also function as a regulator of NKA localization to the plasma membrane. The chain is FXYD domain-containing ion transport regulator 6 (FXYD6) from Pongo abelii (Sumatran orangutan).